The following is a 591-amino-acid chain: ATP-dependent lipid A-core flippase (591 aa).

Transmembrane regions (helical) follow at residues 34–54, 71–91, 158–178, 258–278, and 285–305; these read LILA…LAVI, IWSV…CNFF, LVVI…TVII, LTPL…AVAL, and TLTA…FDPI. An ABC transmembrane type-1 domain is found at 35–317; sequence ILAVLLMAGA…LTNLASKMQK (283 aa). The ABC transporter domain occupies 350-586; the sequence is IEFRQIGHRF…GGLYATLYNM (237 aa). Residue 384-391 coordinates ATP; that stretch reads GRSGSGKT.

The protein belongs to the ABC transporter superfamily. Lipid exporter (TC 3.A.1.106) family. In terms of assembly, homodimer.

The protein resides in the cell inner membrane. It carries out the reaction ATP + H2O + lipid A-core oligosaccharideSide 1 = ADP + phosphate + lipid A-core oligosaccharideSide 2.. Its function is as follows. Involved in lipopolysaccharide (LPS) biosynthesis. Translocates lipid A-core from the inner to the outer leaflet of the inner membrane. Transmembrane domains (TMD) form a pore in the inner membrane and the ATP-binding domain (NBD) is responsible for energy generation. This chain is ATP-dependent lipid A-core flippase, found in Bordetella avium (strain 197N).